The sequence spans 29 residues: Cycloviolacin-O21 (29 aa).

Positions Gly1–Asn29 form a cross-link, cyclopeptide (Gly-Asn). Cystine bridges form between Cys5–Cys19, Cys9–Cys21, and Cys14–Cys26.

Post-translationally, this is a cyclic peptide. In terms of tissue distribution, expressed in leaves, petals, petioles, and runners but not in roots (at protein level).

In terms of biological role, probably participates in a plant defense mechanism. This chain is Cycloviolacin-O21, found in Viola odorata (Sweet violet).